The following is a 251-amino-acid chain: tRNA (guanine-N(1)-)-methyltransferase (251 aa).

S-adenosyl-L-methionine is bound by residues G114 and 134–139 (IGDYVL).

It belongs to the RNA methyltransferase TrmD family. As to quaternary structure, homodimer.

Its subcellular location is the cytoplasm. The enzyme catalyses guanosine(37) in tRNA + S-adenosyl-L-methionine = N(1)-methylguanosine(37) in tRNA + S-adenosyl-L-homocysteine + H(+). Its function is as follows. Specifically methylates guanosine-37 in various tRNAs. This Pelotomaculum thermopropionicum (strain DSM 13744 / JCM 10971 / SI) protein is tRNA (guanine-N(1)-)-methyltransferase.